The primary structure comprises 336 residues: Glyceraldehyde-3-phosphate dehydrogenase 1 (336 aa).

NAD(+) contacts are provided by residues 13 to 14 (RI) and Asp35. A Phosphoserine modification is found at Ser59. Arg80 lines the NAD(+) pocket. Ser125 carries the post-translational modification Phosphoserine. Residues 151–153 (SCT), Thr182, 211–212 (TG), and Arg234 each bind D-glyceraldehyde 3-phosphate. The active-site Nucleophile is the Cys152. NAD(+) is bound at residue Asn316.

This sequence belongs to the glyceraldehyde-3-phosphate dehydrogenase family. As to quaternary structure, homotetramer.

The protein resides in the cytoplasm. It catalyses the reaction D-glyceraldehyde 3-phosphate + phosphate + NAD(+) = (2R)-3-phospho-glyceroyl phosphate + NADH + H(+). Its pathway is carbohydrate degradation; glycolysis; pyruvate from D-glyceraldehyde 3-phosphate: step 1/5. In Schizosaccharomyces pombe (strain 972 / ATCC 24843) (Fission yeast), this protein is Glyceraldehyde-3-phosphate dehydrogenase 1 (tdh1).